The chain runs to 61 residues: Small ribosomal subunit protein uS14 (61 aa).

The Zn(2+) site is built by Cys24, Cys27, Cys40, and Cys43.

It belongs to the universal ribosomal protein uS14 family. Zinc-binding uS14 subfamily. As to quaternary structure, part of the 30S ribosomal subunit. Contacts proteins S3 and S10. It depends on Zn(2+) as a cofactor.

In terms of biological role, binds 16S rRNA, required for the assembly of 30S particles and may also be responsible for determining the conformation of the 16S rRNA at the A site. The polypeptide is Small ribosomal subunit protein uS14 (Finegoldia magna (strain ATCC 29328 / DSM 20472 / WAL 2508) (Peptostreptococcus magnus)).